Here is a 503-residue protein sequence, read N- to C-terminus: Podocalyxin (503 aa).

A signal peptide spans 1 to 21 (MPPTTALSALLLLLLSPASHS). Residues 19-236 (SHSHNGNETS…PLTSQTPGIT (218 aa)) are disordered. The segment covering 20-50 (HSHNGNETSTSAIKSSTVQSHQSATTSTEVT) has biased composition (polar residues). The Extracellular portion of the chain corresponds to 22–404 (HNGNETSTSA…PPEVNEDRFS (383 aa)). Asn25, Asn89, and Asn94 each carry an N-linked (GlcNAc...) asparagine glycan. Low complexity predominate over residues 61 to 91 (STQPSNPTPFTTSTQSPSMPTSTPNPTSNQS). Low complexity predominate over residues 107–126 (TSSPSSTAFTSSSGQTASSG). The span at 131 to 183 (DSFTTAPTTTLGLINVSSQPTDLNTTSKLLSTPTTDNTTSPQQPVDSSPSTAS) shows a compositional bias: polar residues. N-linked (GlcNAc...) asparagine glycans are attached at residues Asn145, Asn154, Asn167, and Asn206. Residues 196-208 (SSSGSTPSTDNST) show a composition bias toward low complexity. The span at 222–236 (SEATQPLTSQTPGIT) shows a compositional bias: polar residues. N-linked (GlcNAc...) asparagine glycosylation occurs at Asn303. The helical transmembrane segment at 405-425 (LPLIITIVCMASFLLLVAALY) threads the bilayer. The Cytoplasmic segment spans residues 426-503 (GCCHQRISQR…DLDEEEDTHL (78 aa)). Thr463 is modified (phosphothreonine). Ser482 carries the phosphoserine modification. Residue Thr501 is modified to Phosphothreonine.

This sequence belongs to the podocalyxin family. As to quaternary structure, monomer; when associated with the membrane raft. Oligomer; when integrated in the apical membrane. Found in a complex with EZR, PODXL and NHERF2. Associates with the actin cytoskeleton through complex formation with EZR and NHERF2. Interacts (via the C-terminal PDZ-binding motif DTHL) with NHERF1 (via the PDZ domains); interaction is not detected in glomerular epithelium cells, take place early in the secretory pathway and is necessary for its apical membrane sorting. Interacts (via the C-terminal PDZ-binding motif DTHL) with NHERF2 (via the PDZ 1 domain); interaction is detected in glomerular epithelium cells. Interacts with EZR. Post-translationally, N- and O-linked glycosylated. Sialoglycoprotein. As to expression, expressed in liver cells and hematopoietic cells (at protein level). Glomerular epithelium cell (podocyte).

The protein resides in the apical cell membrane. It localises to the cell projection. It is found in the microvillus. The protein localises to the membrane raft. Its subcellular location is the lamellipodium. The protein resides in the filopodium. It localises to the ruffle. It is found in the membrane. Involved in the regulation of both adhesion and cell morphology and cancer progression. Functions as an anti-adhesive molecule that maintains an open filtration pathway between neighboring foot processes in the podocyte by charge repulsion. Acts as a pro-adhesive molecule, enhancing the adherence of cells to immobilized ligands, increasing the rate of migration and cell-cell contacts in an integrin-dependent manner. Induces the formation of apical actin-dependent microvilli. Involved in the formation of a preapical plasma membrane subdomain to set up initial epithelial polarization and the apical lumen formation during renal tubulogenesis. Plays a role in cancer development and aggressiveness by inducing cell migration and invasion through its interaction with the actin-binding protein EZR. Affects EZR-dependent signaling events, leading to increased activities of the MAPK and PI3K pathways in cancer cells. In Mus musculus (Mouse), this protein is Podocalyxin (Podxl).